The following is a 241-amino-acid chain: tRNA pseudouridine synthase A (241 aa).

The active-site Nucleophile is aspartate 51. Tyrosine 110 is a binding site for substrate.

The protein belongs to the tRNA pseudouridine synthase TruA family. In terms of assembly, homodimer.

The catalysed reaction is uridine(38/39/40) in tRNA = pseudouridine(38/39/40) in tRNA. Its function is as follows. Formation of pseudouridine at positions 38, 39 and 40 in the anticodon stem and loop of transfer RNAs. This Campylobacter jejuni subsp. jejuni serotype O:23/36 (strain 81-176) protein is tRNA pseudouridine synthase A.